Consider the following 308-residue polypeptide: Aspartate carbamoyltransferase catalytic subunit (308 aa).

Positions 55 and 56 each coordinate carbamoyl phosphate. Lys83 contacts L-aspartate. Carbamoyl phosphate is bound by residues Arg105, His133, and Gln136. Residues Arg166 and Arg220 each contribute to the L-aspartate site. Positions 261 and 262 each coordinate carbamoyl phosphate.

The protein belongs to the aspartate/ornithine carbamoyltransferase superfamily. ATCase family. In terms of assembly, heterododecamer (2C3:3R2) of six catalytic PyrB chains organized as two trimers (C3), and six regulatory PyrI chains organized as three dimers (R2).

It catalyses the reaction carbamoyl phosphate + L-aspartate = N-carbamoyl-L-aspartate + phosphate + H(+). Its pathway is pyrimidine metabolism; UMP biosynthesis via de novo pathway; (S)-dihydroorotate from bicarbonate: step 2/3. Its function is as follows. Catalyzes the condensation of carbamoyl phosphate and aspartate to form carbamoyl aspartate and inorganic phosphate, the committed step in the de novo pyrimidine nucleotide biosynthesis pathway. This Chlorobium limicola (strain DSM 245 / NBRC 103803 / 6330) protein is Aspartate carbamoyltransferase catalytic subunit.